A 275-amino-acid chain; its full sequence is Uridine-5'-phosphate dioxygenase (275 aa).

H105, D107, and H247 together coordinate Fe cation.

The cofactor is Fe(2+).

It catalyses the reaction UMP + 2-oxoglutarate + O2 = uridine-5'-aldehyde + succinate + phosphate + CO2. It functions in the pathway antibiotic biosynthesis. Its activity is regulated as follows. Enhanced by ascorbic acid and inhibited by Zn(2+). Dioxygenase involved in the biosynthesis of the capuramycin-type nucleoside antibiotic A-102395. Catalyzes the dephosphorylation and oxidation of UMP to generate uridine-5'-aldehyde. Can also use the alternative alpha-keto acids pyruvate and alpha-ketoadipate (2-oxoadipate), with very low efficiency. Cannot use alpha-ketobutyrate, alpha-ketovalerate and oxaloacetate. This Amycolatopsis sp protein is Uridine-5'-phosphate dioxygenase.